The following is a 249-amino-acid chain: Probable transcriptional regulatory protein ACIAD2052 (249 aa).

This sequence belongs to the TACO1 family.

Its subcellular location is the cytoplasm. This chain is Probable transcriptional regulatory protein ACIAD2052, found in Acinetobacter baylyi (strain ATCC 33305 / BD413 / ADP1).